A 2694-amino-acid chain; its full sequence is Neurobeachin-like protein 1 (2694 aa).

Disordered regions lie at residues 1289 to 1314 (VLMKDNDKNMSTEDTKKNSDEKTDEE), 1330 to 1350 (SLEDRHSLDSNTPLFPEDSSV), and 1381 to 1411 (CEMSDSGSQVPDSLPSTPSPVESTKSFSVHS). Residues 1290 to 1314 (LMKDNDKNMSTEDTKKNSDEKTDEE) are compositionally biased toward basic and acidic residues. Positions 1383-1409 (MSDSGSQVPDSLPSTPSPVESTKSFSV) are enriched in polar residues. Residues 1883–1980 (DQKEKLVLME…VRNKIYSRLL (98 aa)) enclose the BEACH-type PH domain. In terms of domain architecture, BEACH spans 1992–2284 (RSPQELFKAS…QLLKEPHPPR (293 aa)). WD repeat units follow at residues 2439 to 2478 (RHMDIVTCLATDYCGIHLISGSRDTTCMIWQITQQGGVPV) and 2490 to 2531 (GHTN…RTLR).

It belongs to the WD repeat neurobeachin family. Highly expressed in brain, kidney, prostate and testis. Weakly expressed in ovary, small intestine, colon and peripheral blood leukocytes. May be correlative to several tumors, such as ovary serous adenocarcinoma and metastasis mammary gland carcinoma breast.

The polypeptide is Neurobeachin-like protein 1 (NBEAL1) (Homo sapiens (Human)).